The chain runs to 102 residues: MANKKIRIRLKAYEHRTLDTAAEKIVETATRTGATVAGPVPLPTERSLYTIIRATHKYKDSREQFEMRTHKRLIDIINPTQKTVDALMKLDLPSGVNVEIKL.

This sequence belongs to the universal ribosomal protein uS10 family. As to quaternary structure, part of the 30S ribosomal subunit.

Functionally, involved in the binding of tRNA to the ribosomes. The polypeptide is Small ribosomal subunit protein uS10 (Streptococcus thermophilus (strain ATCC BAA-250 / LMG 18311)).